We begin with the raw amino-acid sequence, 172 residues long: Chromosome-anchoring protein RacA (172 aa).

Residues threonine 5–lysine 25 constitute a DNA-binding region (H-T-H motif). Disordered stretches follow at residues alanine 57–isoleucine 76 and glutamine 142–alanine 172. Residues proline 62–proline 71 show a composition bias toward pro residues. Residues glutamate 83–arginine 146 are a coiled coil. Positions glutamine 142–histidine 151 are enriched in polar residues.

This sequence belongs to the RacA family.

The protein localises to the cytoplasm. Required for the formation of axial filaments and for anchoring the origin regions at the cell poles in sporulating cells, thus ensuring proper chromosome segregation in the prespore. Binds in a dispersed manner throughout the chromosome but preferentially to sites clustered in the origin portion of the chromosome, causing condensation of the chromosome and its remodeling into an elongated, anchored structure. The sequence is that of Chromosome-anchoring protein RacA from Geobacillus kaustophilus (strain HTA426).